The chain runs to 119 residues: Large ribosomal subunit protein uL18 (119 aa).

It belongs to the universal ribosomal protein uL18 family. Part of the 50S ribosomal subunit; part of the 5S rRNA/L5/L18/L25 subcomplex. Contacts the 5S and 23S rRNAs.

Functionally, this is one of the proteins that bind and probably mediate the attachment of the 5S RNA into the large ribosomal subunit, where it forms part of the central protuberance. This chain is Large ribosomal subunit protein uL18, found in Anaeromyxobacter dehalogenans (strain 2CP-C).